A 1072-amino-acid chain; its full sequence is PWWP domain-containing protein 1 (1072 aa).

Positions 21-133 (DSIQDPKVTP…ADEKELDLGL (113 aa)) are disordered. A compositionally biased stretch (low complexity) spans 25 to 38 (DPKVTPDDTVVDSS). The segment covering 66-77 (RVLESERSEKDG) has biased composition (basic and acidic residues). A compositionally biased stretch (acidic residues) spans 96–128 (KDDESSEVKEEEEEEDGSDDQSSELGSEADEKE). The PWWP domain maps to 173–234 (VGDLVWGKVK…PAELIPFEPN (62 aa)). Residues 365-387 (KSPRSSVSTLEPHNRAPPRAPLS) form a disordered region. A compositionally biased stretch (polar residues) spans 366-375 (SPRSSVSTLE). A Nuclear localization signal 1 motif is present at residues 402–409 (SKKPTKVK). Disordered regions lie at residues 486–619 (AIPG…GEAG), 681–738 (LSVS…KTNQ), 871–931 (KAEP…NGNR), and 944–973 (ENSSKANTEPPQVTMTLNRNSGPSSSSSSV). Basic and acidic residues predominate over residues 498–526 (SLDEEKGLAEKSKERMEERAAVLPEHGKS). Residues 545 to 568 (AGSSLQPLLESHTSASEGKSSTGS) show a composition bias toward polar residues. 3 consecutive short sequence motifs (nuclear localization signal) follow at residues 596–603 (KKKKKEPD), 705–712 (VKRTEDPS), and 733–740 (LKKTNQLK). Positions 706 to 729 (KRTEDPSKAGKKRLSSDRQDEIPS) are enriched in basic and acidic residues. Basic and acidic residues predominate over residues 871-880 (KAEPREPENT). Pro residues predominate over residues 897-906 (LHQPTLPPPN). Residues 921–930 (SSSSNNGNGN) are compositionally biased toward low complexity. Over residues 947–966 (SKANTEPPQVTMTLNRNSGP) the composition is skewed to polar residues.

The protein belongs to the PDP family. As to quaternary structure, interacts with MSI4/FVE. Component of the PRC2 (polycomb repressive complex 2) complex which regulates histone methylation on histone H3K27.

The protein localises to the nucleus. Functionally, together with PDP2, PDP3 and PDP6, interacts with MSI4/FVE and MSI5 to suppress FLC, MAF4 and MAF5 expression by regulating the function of the PRC2 complex and modulating H3K27me3 level, thereby promoting flowering. The sequence is that of PWWP domain-containing protein 1 from Arabidopsis thaliana (Mouse-ear cress).